Consider the following 343-residue polypeptide: Adenine deaminase (343 aa).

Zn(2+) is bound by residues histidine 17, histidine 19, and histidine 197. The active-site Proton donor is the glutamate 200. Aspartate 278 contributes to the Zn(2+) binding site. Residue aspartate 279 coordinates substrate.

It belongs to the metallo-dependent hydrolases superfamily. Adenosine and AMP deaminases family. Adenine deaminase type 2 subfamily. Zn(2+) is required as a cofactor.

It carries out the reaction adenine + H2O + H(+) = hypoxanthine + NH4(+). Catalyzes the hydrolytic deamination of adenine to hypoxanthine. Plays an important role in the purine salvage pathway and in nitrogen catabolism. This chain is Adenine deaminase, found in Rhodopseudomonas palustris (strain BisB18).